A 229-amino-acid chain; its full sequence is 2-C-methyl-D-erythritol 4-phosphate cytidylyltransferase (229 aa).

This sequence belongs to the IspD/TarI cytidylyltransferase family. IspD subfamily.

It catalyses the reaction 2-C-methyl-D-erythritol 4-phosphate + CTP + H(+) = 4-CDP-2-C-methyl-D-erythritol + diphosphate. Its pathway is isoprenoid biosynthesis; isopentenyl diphosphate biosynthesis via DXP pathway; isopentenyl diphosphate from 1-deoxy-D-xylulose 5-phosphate: step 2/6. In terms of biological role, catalyzes the formation of 4-diphosphocytidyl-2-C-methyl-D-erythritol from CTP and 2-C-methyl-D-erythritol 4-phosphate (MEP). The chain is 2-C-methyl-D-erythritol 4-phosphate cytidylyltransferase from Neisseria meningitidis serogroup C (strain 053442).